The chain runs to 183 residues: Peptidyl-tRNA hydrolase (183 aa).

Tyr14 serves as a coordination point for tRNA. His19 functions as the Proton acceptor in the catalytic mechanism. Positions 60 and 62 each coordinate tRNA.

This sequence belongs to the PTH family. Monomer.

It localises to the cytoplasm. The enzyme catalyses an N-acyl-L-alpha-aminoacyl-tRNA + H2O = an N-acyl-L-amino acid + a tRNA + H(+). Its function is as follows. Hydrolyzes ribosome-free peptidyl-tRNAs (with 1 or more amino acids incorporated), which drop off the ribosome during protein synthesis, or as a result of ribosome stalling. Catalyzes the release of premature peptidyl moieties from peptidyl-tRNA molecules trapped in stalled 50S ribosomal subunits, and thus maintains levels of free tRNAs and 50S ribosomes. The polypeptide is Peptidyl-tRNA hydrolase (Mycoplasmoides gallisepticum (strain R(low / passage 15 / clone 2)) (Mycoplasma gallisepticum)).